Consider the following 612-residue polypeptide: Dihydroxy-acid dehydratase (612 aa).

Aspartate 81 is a Mg(2+) binding site. Cysteine 122 contacts [2Fe-2S] cluster. Mg(2+)-binding residues include aspartate 123 and lysine 124. The residue at position 124 (lysine 124) is an N6-carboxylysine. Residue cysteine 193 coordinates [2Fe-2S] cluster. Glutamate 489 lines the Mg(2+) pocket. Catalysis depends on serine 515, which acts as the Proton acceptor.

The protein belongs to the IlvD/Edd family. As to quaternary structure, homodimer. It depends on [2Fe-2S] cluster as a cofactor. The cofactor is Mg(2+).

It carries out the reaction (2R)-2,3-dihydroxy-3-methylbutanoate = 3-methyl-2-oxobutanoate + H2O. The catalysed reaction is (2R,3R)-2,3-dihydroxy-3-methylpentanoate = (S)-3-methyl-2-oxopentanoate + H2O. The protein operates within amino-acid biosynthesis; L-isoleucine biosynthesis; L-isoleucine from 2-oxobutanoate: step 3/4. Its pathway is amino-acid biosynthesis; L-valine biosynthesis; L-valine from pyruvate: step 3/4. Its function is as follows. Functions in the biosynthesis of branched-chain amino acids. Catalyzes the dehydration of (2R,3R)-2,3-dihydroxy-3-methylpentanoate (2,3-dihydroxy-3-methylvalerate) into 2-oxo-3-methylpentanoate (2-oxo-3-methylvalerate) and of (2R)-2,3-dihydroxy-3-methylbutanoate (2,3-dihydroxyisovalerate) into 2-oxo-3-methylbutanoate (2-oxoisovalerate), the penultimate precursor to L-isoleucine and L-valine, respectively. This Xanthomonas euvesicatoria pv. vesicatoria (strain 85-10) (Xanthomonas campestris pv. vesicatoria) protein is Dihydroxy-acid dehydratase.